Reading from the N-terminus, the 179-residue chain is Peptidyl-tRNA hydrolase 2, mitochondrial (179 aa).

A helical membrane pass occupies residues 10-32 (YLTNPGALSLAAGVACGVCLGWG). Glycyl lysine isopeptide (Lys-Gly) (interchain with G-Cter in ubiquitin) cross-links involve residues Lys76, Lys81, Lys95, Lys106, Lys115, Lys171, and Lys177.

Belongs to the PTH2 family. Monomer. Ubiquitinated by PRKN during mitophagy, leading to its degradation and enhancement of mitophagy. Deubiquitinated by USP30.

The protein resides in the mitochondrion outer membrane. It catalyses the reaction an N-acyl-L-alpha-aminoacyl-tRNA + H2O = an N-acyl-L-amino acid + a tRNA + H(+). Its function is as follows. Peptidyl-tRNA hydrolase which releases tRNAs from the ribosome during protein synthesis. Promotes caspase-independent apoptosis by regulating the function of two transcriptional regulators, AES and TLE1. This chain is Peptidyl-tRNA hydrolase 2, mitochondrial (PTRH2), found in Bos taurus (Bovine).